Here is a 1136-residue protein sequence, read N- to C-terminus: Unconventional myosin-Ib (1136 aa).

In terms of domain architecture, Myosin motor spans 15–701 (IGVGDMVLLE…TLFKLEDLRK (687 aa)). Phosphoserine is present on S60. 108–115 (GESGAGKT) is an ATP binding site. Residue K287 forms a Glycyl lysine isopeptide (Lys-Gly) (interchain with G-Cter in SUMO1); alternate linkage. Residue K287 forms a Glycyl lysine isopeptide (Lys-Gly) (interchain with G-Cter in SUMO2); alternate linkage. The interval 578 to 600 (VATLMKNLQTKNPNYIRCIKPND) is actin-binding. IQ domains are found at residues 704 to 733 (LEDL…SQIV), 728 to 748 (KKSQ…KRYQ), 750 to 779 (TKSS…QKRC), 779 to 808 (CKEA…EARN), 808 to 837 (NKHA…EARR), and 837 to 866 (RKHA…ANAG). One can recognise a TH1 domain in the interval 952-1136 (KALYPSSVGQ…NNRLLEVAVP (185 aa)).

Belongs to the TRAFAC class myosin-kinesin ATPase superfamily. Myosin family.

Functionally, motor protein that may participate in process critical to neuronal development and function such as cell migration, neurite outgrowth and vesicular transport. The polypeptide is Unconventional myosin-Ib (MYO1B) (Homo sapiens (Human)).